The primary structure comprises 224 residues: Charged multivesicular body protein 4c (224 aa).

2 disordered regions span residues 1 to 21 (MSVF…PTPQ) and 182 to 224 (SGPE…AWAM). Residues 7–17 (LFGGGGKGGKG) show a composition bias toward gly residues. Residues 21–221 (QEAIQKLRET…DEDDMEELKA (201 aa)) are a coiled coil.

The protein belongs to the SNF7 family. In terms of assembly, probable core component of the endosomal sorting required for transport complex III (ESCRT-III). ESCRT-III components are thought to multimerize to form a flat lattice on the perimeter membrane of the endosome.

It is found in the cytoplasm. The protein localises to the cytosol. The protein resides in the late endosome membrane. Probable core component of the endosomal sorting required for transport complex III (ESCRT-III) which is involved in multivesicular bodies (MVBs) formation and sorting of endosomal cargo proteins into MVBs. MVBs contain intraluminal vesicles (ILVs) that are generated by invagination and scission from the limiting membrane of the endosome and mostly are delivered to lysosomes enabling degradation of membrane proteins, such as stimulated growth factor receptors, lysosomal enzymes and lipids. Key component of the cytokinesis checkpoint, a process required to delay abscission to prevent both premature resolution of intercellular chromosome bridges and accumulation of DNA damage. This Danio rerio (Zebrafish) protein is Charged multivesicular body protein 4c (chmp4c).